Here is a 129-residue protein sequence, read N- to C-terminus: Small ribosomal subunit protein uS11 (129 aa).

It belongs to the universal ribosomal protein uS11 family. In terms of assembly, part of the 30S ribosomal subunit. Interacts with proteins S7 and S18. Binds to IF-3.

Functionally, located on the platform of the 30S subunit, it bridges several disparate RNA helices of the 16S rRNA. Forms part of the Shine-Dalgarno cleft in the 70S ribosome. In Baumannia cicadellinicola subsp. Homalodisca coagulata, this protein is Small ribosomal subunit protein uS11.